Reading from the N-terminus, the 89-residue chain is Small ribosomal subunit protein uS14 (89 aa).

This sequence belongs to the universal ribosomal protein uS14 family. Part of the 30S ribosomal subunit. Contacts proteins S3 and S10.

Binds 16S rRNA, required for the assembly of 30S particles and may also be responsible for determining the conformation of the 16S rRNA at the A site. This chain is Small ribosomal subunit protein uS14, found in Akkermansia muciniphila (strain ATCC BAA-835 / DSM 22959 / JCM 33894 / BCRC 81048 / CCUG 64013 / CIP 107961 / Muc).